The primary structure comprises 249 residues: ATP synthase subunit a (249 aa).

Helical transmembrane passes span 26-46 (FTNS…FLYL), 84-104 (FFPF…LGLF), 114-134 (IVVT…YGFW), 143-163 (LFVP…IEVI), 185-205 (ITLK…VAGA), and 208-228 (AVLP…VAFL).

This sequence belongs to the ATPase A chain family. F-type ATPases have 2 components, CF(1) - the catalytic core - and CF(0) - the membrane proton channel. CF(1) has five subunits: alpha(3), beta(3), gamma(1), delta(1), epsilon(1). CF(0) has three main subunits: a(1), b(2) and c(9-12). The alpha and beta chains form an alternating ring which encloses part of the gamma chain. CF(1) is attached to CF(0) by a central stalk formed by the gamma and epsilon chains, while a peripheral stalk is formed by the delta and b chains.

It localises to the cell inner membrane. Its function is as follows. Key component of the proton channel; it plays a direct role in the translocation of protons across the membrane. This chain is ATP synthase subunit a, found in Chelativorans sp. (strain BNC1).